The chain runs to 1533 residues: Protein TALPID3 (1533 aa).

The tract at residues 32-57 (LSANKRLPVGTGTSLNGTSRGSSDLT) is disordered. Residues 42–57 (TGTSLNGTSRGSSDLT) show a composition bias toward polar residues. The stretch at 182-223 (QSDLEAKVNSVTELLSKLQETDKHLQRVTEQQTSIQRKQEKL) forms a coiled coil. Residues 309 to 321 (KEVEDTSFDKQKS) are compositionally biased toward basic and acidic residues. Disordered regions lie at residues 309–339 (KEVE…VSRD) and 377–400 (LTRK…TPEK). A Phosphoserine modification is found at S406. Residues 467–501 (SVLKDAEKILRGVQNNKKVLEENLEAIIRAKDGAA) are a coiled coil. A required for centrosomal localization region spans residues 467–554 (SVLKDAEKIL…YEQKRFDQKN (88 aa)). The segment at 546–575 (EQKRFDQKNQRTKKGQNMTKDIRTNTQDKT) is disordered. Positions 560–575 (GQNMTKDIRTNTQDKT) are enriched in polar residues. Residues T1042 and T1046 each carry the phosphothreonine modification. The residue at position 1050 (S1050) is a Phosphoserine. T1063 carries the phosphothreonine modification. At S1066 the chain carries Phosphoserine. Residues 1129-1156 (SSPELPKPWGDGDLPLEEENPNSPQEEL) are disordered.

It belongs to the TALPID3 family. As to quaternary structure, interacts with CCP110, CEP290, CEP97, KIF24. In terms of tissue distribution, ubiquitously expressed. Expressed in photoreceptor cells (at protein level).

The protein localises to the cytoplasm. It is found in the cytoskeleton. It localises to the microtubule organizing center. Its subcellular location is the centrosome. The protein resides in the photoreceptor inner segment. The protein localises to the centriole. It is found in the cilium basal body. Required for ciliogenesis and sonic hedgehog/SHH signaling. Required for the centrosomal recruitment of RAB8A and for the targeting of centriole satellite proteins to centrosomes such as of PCM1. May play a role in early ciliogenesis in the disappearance of centriolar satellites that preceeds ciliary vesicle formation. Involved in regulation of cell intracellular organization. Involved in regulation of cell polarity. Required for asymmetrical localization of CEP120 to daughter centrioles. This is Protein TALPID3 (KIAA0586) from Homo sapiens (Human).